The following is a 131-amino-acid chain: Small ribosomal subunit protein bS6 (131 aa).

Lys-93 carries the post-translational modification N6-acetyllysine. A disordered region spans residues 98 to 131 (EASPMVKAKDERRERRDDFANETADDAEAGDSEE). The segment covering 104 to 116 (KAKDERRERRDDF) has biased composition (basic and acidic residues). Over residues 120 to 131 (TADDAEAGDSEE) the composition is skewed to acidic residues.

This sequence belongs to the bacterial ribosomal protein bS6 family.

Functionally, binds together with bS18 to 16S ribosomal RNA. This chain is Small ribosomal subunit protein bS6, found in Escherichia fergusonii (strain ATCC 35469 / DSM 13698 / CCUG 18766 / IAM 14443 / JCM 21226 / LMG 7866 / NBRC 102419 / NCTC 12128 / CDC 0568-73).